The primary structure comprises 356 residues: OVARIAN TUMOR DOMAIN-containing deubiquitinating enzyme 10 (356 aa).

The interval 86 to 117 (DYSHQNQQQQHQQEGYTNNYSNNNNGYAWNDQ) is disordered. Residues 89-115 (HQNQQQQHQQEGYTNNYSNNNNGYAWN) show a composition bias toward low complexity. Residues 213–337 (FTEVKVPGDG…EVHYNAIYLN (125 aa)) enclose the OTU domain. Asp-221 is an active-site residue. Cys-224 acts as the Nucleophile in catalysis. His-330 is an active-site residue.

The protein belongs to the peptidase C85 family.

It carries out the reaction Thiol-dependent hydrolysis of ester, thioester, amide, peptide and isopeptide bonds formed by the C-terminal Gly of ubiquitin (a 76-residue protein attached to proteins as an intracellular targeting signal).. Its function is as follows. Hydrolase that can remove conjugated ubiquitin from proteins in vitro and may therefore play an important regulatory role at the level of protein turnover by preventing degradation. Cysteine protease with a preference for 'Lys-63' over 'Lys-48' over 'Met-1' -linked ubiquitin (UB) tetramers as substrates. Also cleaves RUB-GST fusion. The sequence is that of OVARIAN TUMOR DOMAIN-containing deubiquitinating enzyme 10 from Arabidopsis thaliana (Mouse-ear cress).